A 386-amino-acid polypeptide reads, in one-letter code: Nucleosome assembly protein 1-like 4 (386 aa).

A disordered region spans residues 1–29; it reads MADNSFSDGVPSDSLEAAKNASNTEKLTD. Position 2 is an N-acetylalanine (Ala-2). Phosphoserine is present on residues Ser-5, Ser-7, and Ser-12. A compositionally biased stretch (polar residues) spans 20–29; that stretch reads NASNTEKLTD. Phosphoserine is present on Ser-49. Thr-51 bears the Phosphothreonine mark. Residues Ser-53 and Ser-54 each carry the phosphoserine modification. Phosphothreonine is present on Thr-58. Lys-105 bears the N6-acetyllysine mark. Phosphoserine is present on Ser-125. Lys-146 carries the N6-acetyllysine modification. Positions 265-271 match the Nuclear localization signal motif; the sequence is IKKKQKH. Position 304 is a phosphoserine (Ser-304). The span at 339–370 shows a compositional bias: acidic residues; that stretch reads AIEDDDNFEEGEEGEEEELEGDEEAEDDDDAE. The tract at residues 339-386 is disordered; the sequence is AIEDDDNFEEGEEGEEEELEGDEEAEDDDDAEINPKKEPSQPSECKQQ.

This sequence belongs to the nucleosome assembly protein (NAP) family. As to quaternary structure, interacts with core (H2A, H2B, H3, H4) and linker (H1) histones. Post-translationally, polyglutamylated and polyglycylated. These 2 modifications occur exclusively on glutamate residues and result in either polyglutamate or polyglycine chains on the gamma-carboxyl group. Both modifications can coexist on the same protein on adjacent residues, and lowering polyglycylation levels increases polyglutamylation, and reciprocally. Polyglutamylated by TTLL4. In terms of processing, phosphorylated at the G0/G1 boundary but it is not phosphorylated in S-phase. Phosphorylated protein remains in the cytoplasm in a complex with histones during the G0/G1 transition, whereas dephosphorylation triggers its transport into the nucleus at the G1/S-boundary.

It localises to the nucleus. The protein resides in the cytoplasm. Its function is as follows. Acts as a histone chaperone in nucleosome assembly. In Bos taurus (Bovine), this protein is Nucleosome assembly protein 1-like 4 (NAP1L4).